The following is a 169-amino-acid chain: Probable glutathione peroxidase 2 (169 aa).

Cys-41 is an active-site residue.

Belongs to the glutathione peroxidase family. As to quaternary structure, interacts with DJ1A. In terms of tissue distribution, expressed in leaves, stems, flowers, green siliques and roots.

Its subcellular location is the cytoplasm. The protein localises to the cytosol. The protein resides in the nucleus. The catalysed reaction is 2 glutathione + H2O2 = glutathione disulfide + 2 H2O. Its function is as follows. May constitute a glutathione peroxidase-like protective system against oxidative stresses. This is Probable glutathione peroxidase 2 (GPX2) from Arabidopsis thaliana (Mouse-ear cress).